A 394-amino-acid chain; its full sequence is Putative 8-amino-7-oxononanoate synthase (394 aa).

Substrate is bound at residue R23. 110-111 (GY) contacts pyridoxal 5'-phosphate. A substrate-binding site is contributed by H135. Residues S182, 207-210 (DEAH), and 238-241 (TFSK) each bind pyridoxal 5'-phosphate. The residue at position 241 (K241) is an N6-(pyridoxal phosphate)lysine. T355 provides a ligand contact to substrate.

Belongs to the class-II pyridoxal-phosphate-dependent aminotransferase family. BioF subfamily. As to quaternary structure, homodimer. Pyridoxal 5'-phosphate is required as a cofactor.

It catalyses the reaction 6-carboxyhexanoyl-[ACP] + L-alanine + H(+) = (8S)-8-amino-7-oxononanoate + holo-[ACP] + CO2. Its pathway is cofactor biosynthesis; biotin biosynthesis. Functionally, catalyzes the decarboxylative condensation of pimeloyl-[acyl-carrier protein] and L-alanine to produce 8-amino-7-oxononanoate (AON), [acyl-carrier protein], and carbon dioxide. The polypeptide is Putative 8-amino-7-oxononanoate synthase (bioF) (Bacillus cereus (strain Q1)).